A 111-amino-acid chain; its full sequence is Cytochrome c6 (111 aa).

The N-terminal stretch at 1-25 (MKRLLSLIFLVFVFFAVMLTPPALA) is a signal peptide. Positions 39, 42, 43, and 83 each coordinate heme c.

Belongs to the cytochrome c family. PetJ subfamily. In terms of assembly, monomer. In terms of processing, binds 1 heme c group covalently per subunit.

The protein localises to the cellular thylakoid lumen. Its function is as follows. Functions as an electron carrier between membrane-bound cytochrome b6-f and photosystem I in oxygenic photosynthesis. This is Cytochrome c6 from Rippkaea orientalis (strain PCC 8801 / RF-1) (Cyanothece sp. (strain PCC 8801)).